The following is a 394-amino-acid chain: Shematrin-like protein 2 (394 aa).

A signal peptide spans methionine 1–alanine 19.

Prismatic layer of shell (at protein level). Expressed primarily in the mantle with highest level in the mantle edge and lower level in the mantle pallium.

It localises to the secreted. The polypeptide is Shematrin-like protein 2 (Pinctada maxima (Silver-lipped pearl oyster)).